We begin with the raw amino-acid sequence, 257 residues long: UPF0246 protein PC1_3665 (257 aa).

Belongs to the UPF0246 family.

This chain is UPF0246 protein PC1_3665, found in Pectobacterium carotovorum subsp. carotovorum (strain PC1).